The chain runs to 73 residues: Large ribosomal subunit protein bL31 (73 aa).

This sequence belongs to the bacterial ribosomal protein bL31 family. Type A subfamily. Part of the 50S ribosomal subunit.

Its function is as follows. Binds the 23S rRNA. This chain is Large ribosomal subunit protein bL31, found in Synechococcus sp. (strain JA-3-3Ab) (Cyanobacteria bacterium Yellowstone A-Prime).